We begin with the raw amino-acid sequence, 858 residues long: DNA mismatch repair protein MutS (858 aa).

613–620 contributes to the ATP binding site; it reads GPNMAGKS.

Belongs to the DNA mismatch repair MutS family.

Its function is as follows. This protein is involved in the repair of mismatches in DNA. It is possible that it carries out the mismatch recognition step. This protein has a weak ATPase activity. The polypeptide is DNA mismatch repair protein MutS (Dehalococcoides mccartyi (strain CBDB1)).